We begin with the raw amino-acid sequence, 255 residues long: Small ribosomal subunit protein uS2 (255 aa).

The disordered stretch occupies residues 230–255 (QGSSGRDLGASSEVPVEPALEEAAEG).

Belongs to the universal ribosomal protein uS2 family.

The protein is Small ribosomal subunit protein uS2 of Rhizobium johnstonii (strain DSM 114642 / LMG 32736 / 3841) (Rhizobium leguminosarum bv. viciae).